The chain runs to 237 residues: DNA repair protein RecO (237 aa).

It belongs to the RecO family.

Involved in DNA repair and RecF pathway recombination. The polypeptide is DNA repair protein RecO (Actinobacillus succinogenes (strain ATCC 55618 / DSM 22257 / CCUG 43843 / 130Z)).